Consider the following 493-residue polypeptide: Cytochrome P450 710A3 (493 aa).

The helical transmembrane segment at 5–25 (VSLFASLTPYLVSALLLFLLL) threads the bilayer. Cysteine 435 contributes to the heme binding site.

It belongs to the cytochrome P450 family. The cofactor is heme. In terms of tissue distribution, expressed in stems. Detected in primary root caps and immature petals.

It localises to the membrane. It catalyses the reaction 5-dehydroepisterol + NADPH + O2 + H(+) = ergosta-5,7,22,24(28)-tetraen-3beta-ol + NADP(+) + 2 H2O. Functionally, required to form the C-22 double bond in the sterol side chain. Possesses in vitro C-22 desaturase activity toward beta-sitosterol and produces stigmasterol. The sequence is that of Cytochrome P450 710A3 from Arabidopsis thaliana (Mouse-ear cress).